The following is a 339-amino-acid chain: Ketol-acid reductoisomerase (NADP(+)) (339 aa).

Residues 1 to 182 form the KARI N-terminal Rossmann domain; it reads MRVYYDRDAD…GGGRSGIIET (182 aa). NADP(+)-binding positions include 24-27, K48, S51, T53, and 83-86; these read YGSQ and DELQ. The active site involves H108. G134 lines the NADP(+) pocket. In terms of domain architecture, KARI C-terminal knotted spans 183-328; sequence NFKEECETDL…AKLRGMMPWI (146 aa). 4 residues coordinate Mg(2+): D191, E195, E227, and E231. S252 lines the substrate pocket.

This sequence belongs to the ketol-acid reductoisomerase family. Mg(2+) serves as cofactor.

It catalyses the reaction (2R)-2,3-dihydroxy-3-methylbutanoate + NADP(+) = (2S)-2-acetolactate + NADPH + H(+). The enzyme catalyses (2R,3R)-2,3-dihydroxy-3-methylpentanoate + NADP(+) = (S)-2-ethyl-2-hydroxy-3-oxobutanoate + NADPH + H(+). The protein operates within amino-acid biosynthesis; L-isoleucine biosynthesis; L-isoleucine from 2-oxobutanoate: step 2/4. Its pathway is amino-acid biosynthesis; L-valine biosynthesis; L-valine from pyruvate: step 2/4. Functionally, involved in the biosynthesis of branched-chain amino acids (BCAA). Catalyzes an alkyl-migration followed by a ketol-acid reduction of (S)-2-acetolactate (S2AL) to yield (R)-2,3-dihydroxy-isovalerate. In the isomerase reaction, S2AL is rearranged via a Mg-dependent methyl migration to produce 3-hydroxy-3-methyl-2-ketobutyrate (HMKB). In the reductase reaction, this 2-ketoacid undergoes a metal-dependent reduction by NADPH to yield (R)-2,3-dihydroxy-isovalerate. The chain is Ketol-acid reductoisomerase (NADP(+)) from Agrobacterium fabrum (strain C58 / ATCC 33970) (Agrobacterium tumefaciens (strain C58)).